The following is a 577-amino-acid chain: E3 ubiquitin-protein ligase MSL2 (577 aa).

Residues 1–116 (MNPVNATALY…CEYITQTTLA (116 aa)) are sufficient for interaction with MSL1. Zn(2+)-binding residues include Cys-44, Cys-47, Cys-62, His-64, Cys-67, Cys-70, Cys-81, and Cys-84. An RING-type zinc finger spans residues 44–85 (CCVCGHLLQDPIAPTNSTCQHYVCKTCKGKKMMMKPSCSWCK). A Glycyl lysine isopeptide (Lys-Gly) (interchain with G-Cter in SUMO2) cross-link involves residue Lys-375. The interval 405 to 427 (TKSMKKSHEHGSKKSHSKTKPGI) is disordered. Residues 407–423 (SMKKSHEHGSKKSHSKT) show a composition bias toward basic residues. The residue at position 447 (Ser-447) is a Phosphoserine. A CXC MSL2-type domain is found at 457-508 (QEKKGCKCGRATQNPSVLTCRGQRCPCYSNRKACLDCICRGCQNSYMANGEK). The Zn(2+) site is built by Cys-462, Cys-464, Cys-476, Cys-481, Cys-483, Cys-490, Cys-493, Cys-495, and Cys-498.

The protein belongs to the MSL2 family. In terms of assembly, component of a multisubunit histone acetyltransferase complex (MSL) at least composed of the KAT8/MOF/MYST1, MSL1/hampin, MSL2 and MSL3. Forms a MSL heterotetrameric core with MSL1.

The protein localises to the nucleus. The protein resides in the chromosome. It catalyses the reaction S-ubiquitinyl-[E2 ubiquitin-conjugating enzyme]-L-cysteine + [acceptor protein]-L-lysine = [E2 ubiquitin-conjugating enzyme]-L-cysteine + N(6)-ubiquitinyl-[acceptor protein]-L-lysine.. Its pathway is protein modification; protein ubiquitination. Functionally, non-catalytic component of the MSL histone acetyltransferase complex, a multiprotein complex that mediates the majority of histone H4 acetylation at 'Lys-16' (H4K16ac), an epigenetic mark that prevents chromatin compaction. The MSL complex is required for chromosome stability and genome integrity by maintaining homeostatic levels of H4K16ac. The MSL complex is also involved in gene dosage by promoting up-regulation of genes expressed by the X chromosome. X up-regulation is required to compensate for autosomal biallelic expression. The MSL complex also participates in gene dosage compensation by promoting expression of Tsix non-coding RNA. MSL2 plays a key role in gene dosage by ensuring biallelic expression of a subset of dosage-sensitive genes, including many haploinsufficient genes. Acts by promoting promoter-enhancer contacts, thereby preventing DNA methylation of one allele and creating a methylation-free environment for methylation-sensitive transcription factors such as SP1, KANSL1 and KANSL3. Also acts as an E3 ubiquitin ligase that promotes monoubiquitination of histone H2B at 'Lys-35' (H2BK34Ub), but not that of H2A. This activity is greatly enhanced by heterodimerization with MSL1. H2B ubiquitination in turn stimulates histone H3 methylation at 'Lys-4' (H3K4me) and 'Lys-79' (H3K79me) and leads to gene activation, including that of HOXA9 and MEIS1. Also involved in the DNA damage response by mediating ubiquitination of TP53/p53 and TP53BP1. This Homo sapiens (Human) protein is E3 ubiquitin-protein ligase MSL2.